The primary structure comprises 784 residues: LPS-assembly protein LptD (784 aa).

Positions Met-1–Ala-24 are cleaved as a signal peptide. 2 disulfide bridges follow: Cys-31/Cys-724 and Cys-173/Cys-725.

The protein belongs to the LptD family. As to quaternary structure, component of the lipopolysaccharide transport and assembly complex. Interacts with LptE and LptA. May interact with LptE during assembly of LptD by the beta-barrel assembly machine (BAM). Also interacts with LptM, which promotes the efficient assembly of the LptDE translocon by the BAM complex. Post-translationally, contains two intramolecular disulfide bonds. At least one disulfide bond is required for activity, and protein is probably fully oxidized in vivo.

It is found in the cell outer membrane. Together with LptE, is involved in the assembly of lipopolysaccharide (LPS) at the surface of the outer membrane. Contributes to n-hexane resistance. In Escherichia coli (strain K12), this protein is LPS-assembly protein LptD.